The following is a 160-amino-acid chain: Phosphopantetheine adenylyltransferase (160 aa).

S10 lines the substrate pocket. ATP-binding positions include 10–11 and H18; that span reads SF. Residues K42, T74, and R88 each contribute to the substrate site. ATP contacts are provided by residues 89-91, E99, and 124-130; these read GLR and FYYISSR.

The protein belongs to the bacterial CoaD family. In terms of assembly, homohexamer. Requires Mg(2+) as cofactor.

The protein resides in the cytoplasm. The enzyme catalyses (R)-4'-phosphopantetheine + ATP + H(+) = 3'-dephospho-CoA + diphosphate. Its pathway is cofactor biosynthesis; coenzyme A biosynthesis; CoA from (R)-pantothenate: step 4/5. Functionally, reversibly transfers an adenylyl group from ATP to 4'-phosphopantetheine, yielding dephospho-CoA (dPCoA) and pyrophosphate. The polypeptide is Phosphopantetheine adenylyltransferase (Bdellovibrio bacteriovorus (strain ATCC 15356 / DSM 50701 / NCIMB 9529 / HD100)).